The following is a 60-amino-acid chain: Putative SERF-like protein (60 aa).

Basic and acidic residues predominate over residues 1–53 (MTRGNQRDLARQKNQKKQADLTKGKRTDNLTVEQRKARDAELMREKQKKKEEA). A disordered region spans residues 1 to 60 (MTRGNQRDLARQKNQKKQADLTKGKRTDNLTVEQRKARDAELMREKQKKKEEAAAAGTSK).

Belongs to the SERF family.

This is Putative SERF-like protein from Drosophila melanogaster (Fruit fly).